We begin with the raw amino-acid sequence, 336 residues long: Holliday junction branch migration complex subunit RuvB (336 aa).

Residues A4–Y184 form a large ATPase domain (RuvB-L) region. ATP-binding positions include I23, R24, G65, K68, T69, T70, E131 to Y133, R174, Y184, and R221. T69 provides a ligand contact to Mg(2+). Residues Q185–N255 are small ATPAse domain (RuvB-S). The tract at residues A258–P336 is head domain (RuvB-H). 3 residues coordinate DNA: R294, R313, and R318.

It belongs to the RuvB family. As to quaternary structure, homohexamer. Forms an RuvA(8)-RuvB(12)-Holliday junction (HJ) complex. HJ DNA is sandwiched between 2 RuvA tetramers; dsDNA enters through RuvA and exits via RuvB. An RuvB hexamer assembles on each DNA strand where it exits the tetramer. Each RuvB hexamer is contacted by two RuvA subunits (via domain III) on 2 adjacent RuvB subunits; this complex drives branch migration. In the full resolvosome a probable DNA-RuvA(4)-RuvB(12)-RuvC(2) complex forms which resolves the HJ.

The protein resides in the cytoplasm. It carries out the reaction ATP + H2O = ADP + phosphate + H(+). In terms of biological role, the RuvA-RuvB-RuvC complex processes Holliday junction (HJ) DNA during genetic recombination and DNA repair, while the RuvA-RuvB complex plays an important role in the rescue of blocked DNA replication forks via replication fork reversal (RFR). RuvA specifically binds to HJ cruciform DNA, conferring on it an open structure. The RuvB hexamer acts as an ATP-dependent pump, pulling dsDNA into and through the RuvAB complex. RuvB forms 2 homohexamers on either side of HJ DNA bound by 1 or 2 RuvA tetramers; 4 subunits per hexamer contact DNA at a time. Coordinated motions by a converter formed by DNA-disengaged RuvB subunits stimulates ATP hydrolysis and nucleotide exchange. Immobilization of the converter enables RuvB to convert the ATP-contained energy into a lever motion, pulling 2 nucleotides of DNA out of the RuvA tetramer per ATP hydrolyzed, thus driving DNA branch migration. The RuvB motors rotate together with the DNA substrate, which together with the progressing nucleotide cycle form the mechanistic basis for DNA recombination by continuous HJ branch migration. Branch migration allows RuvC to scan DNA until it finds its consensus sequence, where it cleaves and resolves cruciform DNA. This chain is Holliday junction branch migration complex subunit RuvB, found in Salmonella choleraesuis (strain SC-B67).